A 62-amino-acid polypeptide reads, in one-letter code: Large ribosomal subunit protein bL28 (62 aa).

The protein belongs to the bacterial ribosomal protein bL28 family.

The polypeptide is Large ribosomal subunit protein bL28 (Staphylococcus haemolyticus (strain JCSC1435)).